The sequence spans 212 residues: Kynurenine formamidase (212 aa).

Tryptophan 18 is a binding site for substrate. Positions 48, 52, and 54 each coordinate Zn(2+). Histidine 58 acts as the Proton donor/acceptor in catalysis. Zn(2+)-binding residues include histidine 160 and glutamate 172.

The protein belongs to the Cyclase 1 superfamily. KynB family. In terms of assembly, homodimer. The cofactor is Zn(2+).

The enzyme catalyses N-formyl-L-kynurenine + H2O = L-kynurenine + formate + H(+). It participates in amino-acid degradation; L-tryptophan degradation via kynurenine pathway; L-kynurenine from L-tryptophan: step 2/2. Catalyzes the hydrolysis of N-formyl-L-kynurenine to L-kynurenine, the second step in the kynurenine pathway of tryptophan degradation. The polypeptide is Kynurenine formamidase (Paraburkholderia phytofirmans (strain DSM 17436 / LMG 22146 / PsJN) (Burkholderia phytofirmans)).